A 1259-amino-acid polypeptide reads, in one-letter code: Trafficking protein particle complex II-specific subunit 130 homolog (1259 aa).

Residue Ala-2 is modified to N-acetylalanine. Residues 479–526 (GNIPEMFDGRPSFTEGSGLEASPRTPSSLKVQAPPMSRTNSSPGNFES) form a disordered region.

Belongs to the TMEM1 family. Part of the multisubunit TRAPP (transport protein particle) II complex composed of BET3, BET5, TRS20, TRS23, TRS31, TRS33, TRS65, TRS85, TRS120 and TRS130.

The protein resides in the golgi apparatus. The protein localises to the trans-Golgi network. It is found in the early endosome. In terms of biological role, specific subunit of the TRAPP II complex, a highly conserved vesicle tethering complex that is required for the proper transport of proteins in post-Golgi trafficking pathways to the growing cell plate in mitotic active cells. Required for the polarized and selective transport of PIN2, but not PIN1, to the plasma membrane. Not required for ER-to-Golgi as well as biosynthetic and endocytic vacuolar transport. This is Trafficking protein particle complex II-specific subunit 130 homolog from Arabidopsis thaliana (Mouse-ear cress).